A 22-amino-acid polypeptide reads, in one-letter code: 5-methyltetrahydropteroyltriglutamate--homocysteine methyltransferase (22 aa).

This sequence belongs to the vitamin-B12 independent methionine synthase family. The cofactor is Zn(2+).

Its subcellular location is the cytoplasm. It catalyses the reaction 5-methyltetrahydropteroyltri-L-glutamate + L-homocysteine = tetrahydropteroyltri-L-glutamate + L-methionine. The protein operates within amino-acid biosynthesis; L-methionine biosynthesis via de novo pathway; L-methionine from L-homocysteine (MetE route): step 1/1. Functionally, catalyzes the transfer of a methyl group from 5-methyltetrahydrofolate to homocysteine resulting in methionine formation. The chain is 5-methyltetrahydropteroyltriglutamate--homocysteine methyltransferase from Pseudotsuga menziesii (Douglas-fir).